Here is a 344-residue protein sequence, read N- to C-terminus: Protein RecA (344 aa).

An ATP-binding site is contributed by Gly-65–Thr-72.

Belongs to the RecA family.

It localises to the cytoplasm. Functionally, can catalyze the hydrolysis of ATP in the presence of single-stranded DNA, the ATP-dependent uptake of single-stranded DNA by duplex DNA, and the ATP-dependent hybridization of homologous single-stranded DNAs. It interacts with LexA causing its activation and leading to its autocatalytic cleavage. The polypeptide is Protein RecA (Xanthomonas oryzae pv. oryzae (strain PXO99A)).